The primary structure comprises 296 residues: MAMRQCAIYGKGGIGKSTTTQNLVAALAELGKKVMIVGCDPKADSTRLILHSKAQNTIMEMAAEAGTVEDLELEDVLKTGYGDIKCVESGGPEPGVGCAGRGVITAINFLEEKAAYEDDLDFVFYDVLGDVVCGGFAMPIRENKAQEIYVVCSGEMMAMYAANNISKGIVKYANSGSVRLGGLICNSRNTDREDELIMALADKLGSQMIHFVPRDNVVQRAEIRRMTVIEYDPAAKQADEYRTLAKKIVENKKLVIPTPISMDELEALLMEFGIMDEEDMTIVGKTAAEEPAFCSL.

Residue 10–17 (GKGGIGKS) coordinates ATP. Residue C98 participates in [4Fe-4S] cluster binding. ADP-ribosylarginine; by dinitrogenase reductase ADP-ribosyltransferase is present on R101. Position 133 (C133) interacts with [4Fe-4S] cluster.

This sequence belongs to the NifH/BchL/ChlL family. As to quaternary structure, homodimer. It depends on [4Fe-4S] cluster as a cofactor. The reversible ADP-ribosylation of Arg-101 inactivates the nitrogenase reductase and regulates nitrogenase activity.

It carries out the reaction N2 + 8 reduced [2Fe-2S]-[ferredoxin] + 16 ATP + 16 H2O = H2 + 8 oxidized [2Fe-2S]-[ferredoxin] + 2 NH4(+) + 16 ADP + 16 phosphate + 6 H(+). Its function is as follows. The key enzymatic reactions in nitrogen fixation are catalyzed by the nitrogenase complex, which has 2 components: the iron protein and the molybdenum-iron protein. The polypeptide is Nitrogenase iron protein (nifH) (Alcaligenes faecalis).